The primary structure comprises 390 residues: Terminal nucleotidyltransferase 5C (390 aa).

It belongs to the TENT family.

It localises to the nucleus. It is found in the cytoplasm. The protein localises to the cytoskeleton. Its subcellular location is the microtubule organizing center. The protein resides in the centrosome. It carries out the reaction RNA(n) + ATP = RNA(n)-3'-adenine ribonucleotide + diphosphate. Its function is as follows. Catalyzes the transfer of one adenosine molecule from an ATP to an mRNA poly(A) tail bearing a 3'-OH terminal group and enhances mRNA stability and gene expression. In Gallus gallus (Chicken), this protein is Terminal nucleotidyltransferase 5C.